Consider the following 682-residue polypeptide: DNA ligase (682 aa).

Residues 42-46, 91-92, and E124 each bind NAD(+); these read DAEYD and SL. K126 acts as the N6-AMP-lysine intermediate in catalysis. Residues R147, E184, K302, and K326 each coordinate NAD(+). Zn(2+) contacts are provided by C420, C423, C438, and C444. The region spanning 603–682 is the BRCT domain; sequence IADNPLKGKS…QEFIALTGEN (80 aa).

This sequence belongs to the NAD-dependent DNA ligase family. LigA subfamily. The cofactor is Mg(2+). Mn(2+) serves as cofactor.

The catalysed reaction is NAD(+) + (deoxyribonucleotide)n-3'-hydroxyl + 5'-phospho-(deoxyribonucleotide)m = (deoxyribonucleotide)n+m + AMP + beta-nicotinamide D-nucleotide.. In terms of biological role, DNA ligase that catalyzes the formation of phosphodiester linkages between 5'-phosphoryl and 3'-hydroxyl groups in double-stranded DNA using NAD as a coenzyme and as the energy source for the reaction. It is essential for DNA replication and repair of damaged DNA. This chain is DNA ligase, found in Actinobacillus pleuropneumoniae serotype 3 (strain JL03).